Consider the following 201-residue polypeptide: Probable nicotinate-nucleotide adenylyltransferase (201 aa).

A disordered region spans residues 182–201; it reads GPESSQSATSIRERGGWSLR. Positions 192–201 are enriched in basic and acidic residues; that stretch reads IRERGGWSLR.

This sequence belongs to the NadD family.

It carries out the reaction nicotinate beta-D-ribonucleotide + ATP + H(+) = deamido-NAD(+) + diphosphate. The protein operates within cofactor biosynthesis; NAD(+) biosynthesis; deamido-NAD(+) from nicotinate D-ribonucleotide: step 1/1. Catalyzes the reversible adenylation of nicotinate mononucleotide (NaMN) to nicotinic acid adenine dinucleotide (NaAD). The sequence is that of Probable nicotinate-nucleotide adenylyltransferase from Parvibaculum lavamentivorans (strain DS-1 / DSM 13023 / NCIMB 13966).